The sequence spans 38 residues: Toxic protein TimP (38 aa).

A transmembrane span lies at residues 1-20 (MKVRCFCVVLLVSGTLCLHA).

It belongs to the TimP toxin family.

It localises to the cell inner membrane. Toxic component of a probable type I toxin-antitoxin (TA) system. Neutralized by sRNA antitoxin TimR which binds to the 5' UTR of timP mRNA and inhibits translation. When TimP is expressed from its promoter in the absence of antitoxin leads to mild cell stress; overexpression in situ is toxic to the cell and causes membrane leakage. The antitoxin gene is encoded immediately upstream and transcribed divergently from the toxin gene; antitoxin RNA is less stable than timP mRNA. In Salmonella typhimurium (strain SL1344), this protein is Toxic protein TimP.